The chain runs to 166 residues: Lipoprotein signal peptidase (166 aa).

The next 3 helical transmembrane spans lie at 12 to 32 (WLWL…LILQ), 70 to 90 (WFFA…MYRS), and 102 to 122 (ALII…GFVV). Catalysis depends on residues Asp123 and Asp141. A helical transmembrane segment spans residues 137-157 (FNLADTAICIGAALIVLEGFL).

It belongs to the peptidase A8 family.

It localises to the cell inner membrane. The catalysed reaction is Release of signal peptides from bacterial membrane prolipoproteins. Hydrolyzes -Xaa-Yaa-Zaa-|-(S,diacylglyceryl)Cys-, in which Xaa is hydrophobic (preferably Leu), and Yaa (Ala or Ser) and Zaa (Gly or Ala) have small, neutral side chains.. The protein operates within protein modification; lipoprotein biosynthesis (signal peptide cleavage). This protein specifically catalyzes the removal of signal peptides from prolipoproteins. The polypeptide is Lipoprotein signal peptidase (Salmonella typhi).